Consider the following 378-residue polypeptide: Erythronate-4-phosphate dehydrogenase (378 aa).

S45 and T66 together coordinate substrate. Residues D146 and T175 each contribute to the NAD(+) site. Residue R208 is part of the active site. An NAD(+)-binding site is contributed by D232. E237 is a catalytic residue. Catalysis depends on H254, which acts as the Proton donor. G257 is a binding site for NAD(+). Substrate is bound at residue Y258.

It belongs to the D-isomer specific 2-hydroxyacid dehydrogenase family. PdxB subfamily. As to quaternary structure, homodimer.

It is found in the cytoplasm. It catalyses the reaction 4-phospho-D-erythronate + NAD(+) = (R)-3-hydroxy-2-oxo-4-phosphooxybutanoate + NADH + H(+). The protein operates within cofactor biosynthesis; pyridoxine 5'-phosphate biosynthesis; pyridoxine 5'-phosphate from D-erythrose 4-phosphate: step 2/5. In terms of biological role, catalyzes the oxidation of erythronate-4-phosphate to 3-hydroxy-2-oxo-4-phosphonooxybutanoate. The chain is Erythronate-4-phosphate dehydrogenase from Escherichia coli O45:K1 (strain S88 / ExPEC).